Here is a 440-residue protein sequence, read N- to C-terminus: Acyltransferase Pun1 (440 aa).

Residues histidine 169 and aspartate 384 each act as proton acceptor in the active site.

This sequence belongs to the plant acyltransferase family.

The catalysed reaction is vanillylamine + (6E)-8-methylnon-6-enoyl-CoA = capsaicin + CoA + H(+). It carries out the reaction (6E)-8-methylnon-6-enoyl-CoA + 4-hydroxy-3-methoxy-benzenemethanol = capsiate + CoA. In terms of biological role, involved in the biosynthesis of capsaicinoids and capsinoids natural products, pungent alkaloids synthesized from phenylpropanoid intermediates in the placental tissue of chili pepper fruit acting as repellant on herbivorous mammals and conferring spiciness to hot peppers. Catalyzes the biosynthesis of capsaicin, a pungent component, and of capsiate, a non-pungent component, from vanillylamine and vanillyl alcohol, respectively. Can transfer an acyl from 8-methylnon-6-enoyl-CoA to vanillylamine forming capsaicin and CoA. This is Acyltransferase Pun1 from Capsicum frutescens (Cayenne pepper).